The sequence spans 292 residues: Probable endonuclease 4 (292 aa).

The Zn(2+) site is built by His69, His109, Glu145, Asp179, His182, His216, Asp229, His231, and Glu261.

Belongs to the AP endonuclease 2 family. It depends on Zn(2+) as a cofactor.

The enzyme catalyses Endonucleolytic cleavage to 5'-phosphooligonucleotide end-products.. Functionally, endonuclease IV plays a role in DNA repair. It cleaves phosphodiester bonds at apurinic or apyrimidinic (AP) sites, generating a 3'-hydroxyl group and a 5'-terminal sugar phosphate. The protein is Probable endonuclease 4 of Desulfotalea psychrophila (strain LSv54 / DSM 12343).